The primary structure comprises 372 residues: N-methyl-L-tryptophan oxidase (372 aa).

An FAD-binding site is contributed by 4–34; it reads DLIIIGSGSVGAAAGYYATRAGLKVLMTDAH. Cys307 carries the S-8alpha-FAD cysteine modification.

The protein belongs to the MSOX/MTOX family. MTOX subfamily. Monomer. FAD is required as a cofactor.

The enzyme catalyses N(alpha)-methyl-L-tryptophan + O2 + H2O = L-tryptophan + formaldehyde + H2O2. In terms of biological role, catalyzes the oxidative demethylation of N-methyl-L-tryptophan. This is N-methyl-L-tryptophan oxidase from Salmonella arizonae (strain ATCC BAA-731 / CDC346-86 / RSK2980).